A 773-amino-acid polypeptide reads, in one-letter code: DNA polymerase (773 aa).

Positions 1–131 (MILDADYITE…IDRGLIPMEG (131 aa)) are N-terminal domain. The exonuclease domain stretch occupies residues 133–385 (EELRMLAFDI…ELARRTESYA (253 aa)). Mg(2+) contacts are provided by Asp-141, Glu-143, and Asp-315. The polymerase domain stretch occupies residues 390-773 (KEPEKGLWEN…GLGAWLKPKT (384 aa)). 2 cysteine pairs are disulfide-bonded: Cys-428–Cys-442 and Cys-506–Cys-509.

It belongs to the DNA polymerase type-B family. Mg(2+) is required as a cofactor.

The catalysed reaction is DNA(n) + a 2'-deoxyribonucleoside 5'-triphosphate = DNA(n+1) + diphosphate. Its activity is regulated as follows. DNA polymerase activity strongly inhibited by uracil-containing oligonucleotides. Thermostable DNA polymerase. In addition to polymerase activity, this DNA polymerase exhibits 3' to 5' exonuclease activity. This Desulfurococcus sp. (strain Tok) protein is DNA polymerase (pol).